Here is a 301-residue protein sequence, read N- to C-terminus: Acetyl-coenzyme A carboxylase carboxyl transferase subunit beta (301 aa).

The CoA carboxyltransferase N-terminal domain occupies 25–294 (LWIKCPETGE…SAANDMNGGA (270 aa)).

It belongs to the AccD/PCCB family. Acetyl-CoA carboxylase is a heterohexamer composed of biotin carboxyl carrier protein (AccB), biotin carboxylase (AccC) and two subunits each of ACCase subunit alpha (AccA) and ACCase subunit beta (AccD).

It localises to the cytoplasm. It catalyses the reaction N(6)-carboxybiotinyl-L-lysyl-[protein] + acetyl-CoA = N(6)-biotinyl-L-lysyl-[protein] + malonyl-CoA. It functions in the pathway lipid metabolism; malonyl-CoA biosynthesis; malonyl-CoA from acetyl-CoA: step 1/1. Its function is as follows. Component of the acetyl coenzyme A carboxylase (ACC) complex. Biotin carboxylase (BC) catalyzes the carboxylation of biotin on its carrier protein (BCCP) and then the CO(2) group is transferred by the transcarboxylase to acetyl-CoA to form malonyl-CoA. The chain is Acetyl-coenzyme A carboxylase carboxyl transferase subunit beta from Rhizobium etli (strain CIAT 652).